The sequence spans 255 residues: MSKLNWNVEGVTESLKAKATALGVDVISQEQVAAIAAELAAETGKDVTARSVGSKLRKEGFEVQKANEVQKSPWTPEQEAELVDFLNAHAGQYTYAEIAAAVAGGQFGAKQVQGKILSLEMTASVKPTEKAAAVRSFTPDEETDFVNQVVAGATIEAIAAHFGRNIKQIRGKALSLLREGRIAAMPVQETSSAKTREDLLEGLDLVNMTVAEIAEKTGKSERGVKSMLSRRGLVAKDYDGAAKRAKLDAKAAAAE.

Functionally, putative transcription factor required for the expression of viral late genes. The chain is Putative transcription factor D5 from Escherichia coli (Enterobacteria phage T5).